Consider the following 316-residue polypeptide: Olfactory receptor 4N4 (316 aa).

Topologically, residues M1 to L25 are extracellular. An N-linked (GlcNAc...) asparagine glycan is attached at N5. Residues L26 to I49 form a helical membrane-spanning segment. Residues R50–A57 lie on the Cytoplasmic side of the membrane. The chain crosses the membrane as a helical span at residues P58–P79. Residues R80–Q100 are Extracellular-facing. C97 and C189 are joined by a disulfide. The chain crosses the membrane as a helical span at residues L101 to F120. Residues D121 to R139 lie on the Cytoplasmic side of the membrane. Residues A140 to I158 traverse the membrane as a helical segment. Residues Q159–V195 lie on the Extracellular side of the membrane. The helical transmembrane segment at E196–A219 threads the bilayer. At V220–K235 the chain is on the cytoplasmic side. The helical transmembrane segment at A236–Y258 threads the bilayer. Residues M259–K269 are Extracellular-facing. Residues M270–L289 form a helical membrane-spanning segment. Over R290–N316 the chain is Cytoplasmic.

This sequence belongs to the G-protein coupled receptor 1 family.

Its subcellular location is the cell membrane. Odorant receptor. This is Olfactory receptor 4N4 (OR4N4) from Homo sapiens (Human).